We begin with the raw amino-acid sequence, 191 residues long: Peptidyl-tRNA hydrolase (191 aa).

TRNA is bound at residue Tyr-16. Catalysis depends on His-21, which acts as the Proton acceptor. Positions 67, 69, and 115 each coordinate tRNA.

The protein belongs to the PTH family. Monomer.

It localises to the cytoplasm. The enzyme catalyses an N-acyl-L-alpha-aminoacyl-tRNA + H2O = an N-acyl-L-amino acid + a tRNA + H(+). Hydrolyzes ribosome-free peptidyl-tRNAs (with 1 or more amino acids incorporated), which drop off the ribosome during protein synthesis, or as a result of ribosome stalling. Its function is as follows. Catalyzes the release of premature peptidyl moieties from peptidyl-tRNA molecules trapped in stalled 50S ribosomal subunits, and thus maintains levels of free tRNAs and 50S ribosomes. This is Peptidyl-tRNA hydrolase from Wigglesworthia glossinidia brevipalpis.